The primary structure comprises 717 residues: Ribosomal RNA large subunit methyltransferase K/L (717 aa).

Residues 45 to 142 form the THUMP domain; sequence GAYRICLGSR…DKRSGVQTVQ (98 aa).

The protein belongs to the methyltransferase superfamily. RlmKL family.

It is found in the cytoplasm. The enzyme catalyses guanosine(2445) in 23S rRNA + S-adenosyl-L-methionine = N(2)-methylguanosine(2445) in 23S rRNA + S-adenosyl-L-homocysteine + H(+). It catalyses the reaction guanosine(2069) in 23S rRNA + S-adenosyl-L-methionine = N(2)-methylguanosine(2069) in 23S rRNA + S-adenosyl-L-homocysteine + H(+). In terms of biological role, specifically methylates the guanine in position 2445 (m2G2445) and the guanine in position 2069 (m7G2069) of 23S rRNA. This chain is Ribosomal RNA large subunit methyltransferase K/L, found in Hahella chejuensis (strain KCTC 2396).